A 236-amino-acid chain; its full sequence is MLQFILRRIVKALLWFAAGSVLVVLVLRWVPPPGTALMVERKVESWVDGEPIDLQRDWEPWDRISDNLKIAVIAGEDQKFAEHWGFDVDAIQAAILHNERGGSIRGASTLSQQVSKNLFLWSGRSYLRKGLEAWFTMLIELLWSKERILEVYLNSVEWDEGVFGAQAAAQHHFRTNASALSVQQASYLAAVLPNPREWSASHPSSYVSRRAGWIRQQMRQLGGDEYLQGLNSSRRW.

Residues 12 to 31 (ALLWFAAGSVLVVLVLRWVP) traverse the membrane as a helical segment.

The protein belongs to the glycosyltransferase 51 family.

The protein localises to the cell inner membrane. It catalyses the reaction [GlcNAc-(1-&gt;4)-Mur2Ac(oyl-L-Ala-gamma-D-Glu-L-Lys-D-Ala-D-Ala)](n)-di-trans,octa-cis-undecaprenyl diphosphate + beta-D-GlcNAc-(1-&gt;4)-Mur2Ac(oyl-L-Ala-gamma-D-Glu-L-Lys-D-Ala-D-Ala)-di-trans,octa-cis-undecaprenyl diphosphate = [GlcNAc-(1-&gt;4)-Mur2Ac(oyl-L-Ala-gamma-D-Glu-L-Lys-D-Ala-D-Ala)](n+1)-di-trans,octa-cis-undecaprenyl diphosphate + di-trans,octa-cis-undecaprenyl diphosphate + H(+). The protein operates within cell wall biogenesis; peptidoglycan biosynthesis. Functionally, peptidoglycan polymerase that catalyzes glycan chain elongation from lipid-linked precursors. The protein is Biosynthetic peptidoglycan transglycosylase of Pseudomonas savastanoi pv. phaseolicola (strain 1448A / Race 6) (Pseudomonas syringae pv. phaseolicola (strain 1448A / Race 6)).